The primary structure comprises 24 residues: Protein YsdE (24 aa).

The chain is Protein YsdE from Escherichia coli (strain K12).